An 82-amino-acid chain; its full sequence is Large ribosomal subunit protein bL27 (82 aa).

Residues 1–20 are disordered; sequence MAHKKGASSSRNGRDSNPQY. Positions 7–19 are enriched in polar residues; that stretch reads ASSSRNGRDSNPQ.

The protein belongs to the bacterial ribosomal protein bL27 family.

The protein is Large ribosomal subunit protein bL27 of Bifidobacterium longum (strain NCC 2705).